We begin with the raw amino-acid sequence, 384 residues long: Sphingosine kinase 1 (384 aa).

Residues 12 to 159 enclose the DAGKc domain; it reads PRPCRVLVLL…MNLLSLHTAS (148 aa). Residues 22-24 and 54-58 contribute to the ATP site; these read NPR and TERRN. 79-82 contacts substrate; the sequence is SGDG. D81 (proton donor/acceptor) is an active-site residue. ATP-binding positions include E86 and 111–113; that span reads GSG. 2 short sequence motifs (nuclear export signal) span residues 147–155 and 161–169; these read LSPMNLLSL and LRLFSVLSL. D178 is a binding site for substrate. R185 and R191 together coordinate ATP. T193 carries the phosphothreonine modification. The residue at position 225 (S225) is a Phosphoserine. 341 to 343 provides a ligand contact to ATP; it reads DGE.

Interacts with ACY1. Binds to calmodulin. Interacts with SPHKAP. Interacts with CIB1, the interaction occurs in a calcium-dependent manner. Interacts with TRAF2. Interacts with EEF1A1; the interaction enhances SPHK1 kinase activity. Mg(2+) is required as a cofactor. As to expression, widely expressed with highest levels in adult liver, kidney, heart and skeletal muscle. Expressed in brain cortex (at protein level).

It localises to the cytoplasm. Its subcellular location is the nucleus. It is found in the cell membrane. The protein resides in the endosome membrane. The protein localises to the membrane. It localises to the clathrin-coated pit. Its subcellular location is the synapse. It carries out the reaction a sphingoid base + ATP = a sphingoid 1-phosphate + ADP + H(+). The enzyme catalyses L-seryl-[protein] + acetyl-CoA = O-acetyl-L-seryl-[protein] + CoA. The catalysed reaction is sphinganine + ATP = sphinganine 1-phosphate + ADP + H(+). It catalyses the reaction sphing-4-enine + ATP = sphing-4-enine 1-phosphate + ADP + H(+). It carries out the reaction 1-O-hexadecyl-2-amino-sn-glycerol + ATP = 1-O-hexadecyl-2-desoxy-2-amino-sn-glycero-3-phosphate + ADP + H(+). Acetyltransferase activity increases in presence of the kinase substrate, sphingosine. In Purkinje cells, kinase activity on sphingosine increases in presence of VEGFA. In neurons, kinase activity increases during the first 24h in presence of Amyloid-beta protein 42 to decrease after 96h. In terms of biological role, catalyzes the phosphorylation of sphingosine to form sphingosine 1-phosphate (SPP), a lipid mediator with both intra- and extracellular functions. Also acts on D-erythro-sphingosine and to a lesser extent sphinganine, but not other lipids, such as D,L-threo-dihydrosphingosine, N,N-dimethylsphingosine, diacylglycerol, ceramide, or phosphatidylinositol. In contrast to proapoptotic SPHK2, has a negative effect on intracellular ceramide levels, enhances cell growth and inhibits apoptosis. Involved in the regulation of inflammatory response and neuroinflammation. Via the product sphingosine 1-phosphate, stimulates TRAF2 E3 ubiquitin ligase activity, and promotes activation of NF-kappa-B in response to TNF signaling leading to IL17 secretion. In response to TNF and in parallel to NF-kappa-B activation, negatively regulates RANTES induction through p38 MAPK signaling pathway. Involved in endocytic membrane trafficking induced by sphingosine, recruited to dilate endosomes, also plays a role on later stages of endosomal maturation and membrane fusion independently of its kinase activity. In Purkinje cells, seems to be also involved in the regulation of autophagosome-lysosome fusion upon VEGFA. Functionally, has serine acetyltransferase activity on PTGS2/COX2 in an acetyl-CoA dependent manner. The acetyltransferase activity increases in presence of the kinase substrate, sphingosine. During neuroinflammation, through PTGS2 acetylation, promotes neuronal secretion of specialized preresolving mediators (SPMs), especially 15-R-lipoxin A4, which results in an increase of phagocytic microglia. The polypeptide is Sphingosine kinase 1 (Homo sapiens (Human)).